The sequence spans 1377 residues: DNA-directed RNA polymerase subunit beta (1377 aa).

It belongs to the RNA polymerase beta chain family. In terms of assembly, the RNAP catalytic core consists of 2 alpha, 1 beta, 1 beta' and 1 omega subunit. When a sigma factor is associated with the core the holoenzyme is formed, which can initiate transcription.

It catalyses the reaction RNA(n) + a ribonucleoside 5'-triphosphate = RNA(n+1) + diphosphate. In terms of biological role, DNA-dependent RNA polymerase catalyzes the transcription of DNA into RNA using the four ribonucleoside triphosphates as substrates. This chain is DNA-directed RNA polymerase subunit beta, found in Azoarcus sp. (strain BH72).